The chain runs to 142 residues: Nucleoside diphosphate kinase (142 aa).

ATP is bound by residues K11, F59, R87, T93, R104, and N114. The Pros-phosphohistidine intermediate role is filled by H117.

This sequence belongs to the NDK family. In terms of assembly, homotetramer. The cofactor is Mg(2+).

Its subcellular location is the cytoplasm. The enzyme catalyses a 2'-deoxyribonucleoside 5'-diphosphate + ATP = a 2'-deoxyribonucleoside 5'-triphosphate + ADP. The catalysed reaction is a ribonucleoside 5'-diphosphate + ATP = a ribonucleoside 5'-triphosphate + ADP. Major role in the synthesis of nucleoside triphosphates other than ATP. The ATP gamma phosphate is transferred to the NDP beta phosphate via a ping-pong mechanism, using a phosphorylated active-site intermediate. The protein is Nucleoside diphosphate kinase of Marinobacter nauticus (strain ATCC 700491 / DSM 11845 / VT8) (Marinobacter aquaeolei).